Here is a 458-residue protein sequence, read N- to C-terminus: Argininosuccinate lyase (458 aa).

It belongs to the lyase 1 family. Argininosuccinate lyase subfamily.

Its subcellular location is the cytoplasm. It carries out the reaction 2-(N(omega)-L-arginino)succinate = fumarate + L-arginine. Its pathway is amino-acid biosynthesis; L-arginine biosynthesis; L-arginine from L-ornithine and carbamoyl phosphate: step 3/3. This Hydrogenobaculum sp. (strain Y04AAS1) protein is Argininosuccinate lyase.